The following is a 366-amino-acid chain: Chorismate synthase (366 aa).

NADP(+)-binding residues include Arg48 and Arg54. FMN is bound by residues 125–127, 237–238, Gly277, 292–296, and Arg318; these read RSS, NA, and KPTSS.

The protein belongs to the chorismate synthase family. Homotetramer. FMNH2 serves as cofactor.

The catalysed reaction is 5-O-(1-carboxyvinyl)-3-phosphoshikimate = chorismate + phosphate. It participates in metabolic intermediate biosynthesis; chorismate biosynthesis; chorismate from D-erythrose 4-phosphate and phosphoenolpyruvate: step 7/7. Functionally, catalyzes the anti-1,4-elimination of the C-3 phosphate and the C-6 proR hydrogen from 5-enolpyruvylshikimate-3-phosphate (EPSP) to yield chorismate, which is the branch point compound that serves as the starting substrate for the three terminal pathways of aromatic amino acid biosynthesis. This reaction introduces a second double bond into the aromatic ring system. In Acidovorax ebreus (strain TPSY) (Diaphorobacter sp. (strain TPSY)), this protein is Chorismate synthase.